The chain runs to 158 residues: Ribosome maturation factor RimP (158 aa).

The protein belongs to the RimP family.

The protein localises to the cytoplasm. Its function is as follows. Required for maturation of 30S ribosomal subunits. This is Ribosome maturation factor RimP from Pediococcus pentosaceus (strain ATCC 25745 / CCUG 21536 / LMG 10740 / 183-1w).